Reading from the N-terminus, the 316-residue chain is Probable cell division protein WhiA (316 aa).

Positions 275–309 (TLKELGEMVSGGKISKSGINHRLRKIDDIAEKLRA) form a DNA-binding region, H-T-H motif.

This sequence belongs to the WhiA family.

Functionally, involved in cell division and chromosome segregation. In Bacillus anthracis (strain CDC 684 / NRRL 3495), this protein is Probable cell division protein WhiA.